A 989-amino-acid polypeptide reads, in one-letter code: Translation initiation factor IF-2 (989 aa).

2 disordered regions span residues 28-60 (GVTKASEDDSLSETDKARLLDHLRKSHGSTDAD) and 97-397 (VRRD…DQNT). Composition is skewed to basic and acidic residues over residues 40–60 (ETDKARLLDHLRKSHGSTDAD) and 122–178 (ELQR…EAAK). Low complexity predominate over residues 182–223 (AAAAEAAAREQQTQASKPAQAAQPAAAKAEPVAAKAAEPVVA). The span at 231–280 (ERAAAERAAQREAAKKAEDAARQAAEKARAEQEEIAKRRAAAEAEARAIR) shows a compositional bias: basic and acidic residues. The segment covering 318–345 (RPAGEAPARPAAKKPAAAAPAATTTPSA) has biased composition (low complexity). Over residues 374–387 (TSGGVDRGWRGGPK) the composition is skewed to gly residues. Positions 489 to 658 (PRPPVVTVMG…LLQAEVLELK (170 aa)) constitute a tr-type G domain. The interval 498–505 (GHVDHGKT) is G1. 498-505 (GHVDHGKT) contacts GTP. Residues 523–527 (GITQH) are G2. The interval 544–547 (DTPG) is G3. GTP contacts are provided by residues 544-548 (DTPGH) and 598-601 (NKID). Residues 598 to 601 (NKID) are G4. Positions 634-636 (SAK) are G5.

The protein belongs to the TRAFAC class translation factor GTPase superfamily. Classic translation factor GTPase family. IF-2 subfamily.

It is found in the cytoplasm. One of the essential components for the initiation of protein synthesis. Protects formylmethionyl-tRNA from spontaneous hydrolysis and promotes its binding to the 30S ribosomal subunits. Also involved in the hydrolysis of GTP during the formation of the 70S ribosomal complex. The chain is Translation initiation factor IF-2 from Paraburkholderia xenovorans (strain LB400).